A 383-amino-acid polypeptide reads, in one-letter code: Na(+)/H(+) antiporter NhaA (383 aa).

The next 11 helical transmembrane spans lie at 14–34 (AGGI…NSPL), 47–67 (FGMS…FLLI), 87–107 (IFPA…YVAF), 117–137 (GWAI…ALLG), 146–166 (VFLL…IALF), 171–191 (LSTM…MLNA), 205–225 (AILW…GVVI), 252–272 (VAFG…LEGV), 280–300 (MLPL…IFTF), 321–341 (IFAV…ISSL), and 356–376 (LGIL…LHFS).

The protein belongs to the NhaA Na(+)/H(+) (TC 2.A.33) antiporter family.

It localises to the cell inner membrane. The enzyme catalyses Na(+)(in) + 2 H(+)(out) = Na(+)(out) + 2 H(+)(in). Functionally, na(+)/H(+) antiporter that extrudes sodium in exchange for external protons. This is Na(+)/H(+) antiporter NhaA from Vibrio alginolyticus.